The following is a 361-amino-acid chain: Aromatic amino acid aminotransferase (361 aa).

N6-(pyridoxal phosphate)lysine is present on Lys-215.

This sequence belongs to the class-II pyridoxal-phosphate-dependent aminotransferase family. In terms of assembly, homodimer. Pyridoxal 5'-phosphate serves as cofactor.

The enzyme catalyses an aromatic L-alpha-amino acid + 2-oxoglutarate = an aromatic oxo-acid + L-glutamate. In terms of biological role, aminotransferase that catalyzes the conversion of aromatic amino acids and 2-oxoglutarate into corresponding aromatic oxo acids and L-glutamate. The sequence is that of Aromatic amino acid aminotransferase from Mycolicibacterium smegmatis (strain ATCC 700084 / mc(2)155) (Mycobacterium smegmatis).